Here is a 224-residue protein sequence, read N- to C-terminus: Urease accessory protein UreF (224 aa).

Belongs to the UreF family. As to quaternary structure, ureD, UreF and UreG form a complex that acts as a GTP-hydrolysis-dependent molecular chaperone, activating the urease apoprotein by helping to assemble the nickel containing metallocenter of UreC. The UreE protein probably delivers the nickel.

Its subcellular location is the cytoplasm. Its function is as follows. Required for maturation of urease via the functional incorporation of the urease nickel metallocenter. The protein is Urease accessory protein UreF of Pseudomonas entomophila (strain L48).